The sequence spans 437 residues: Chromosomal replication initiator protein DnaA (437 aa).

Positions Met1–Asp67 are domain I, interacts with DnaA modulators. The tract at residues Asp67–Thr97 is domain II. Residues Pro98–Arg313 form a domain III, AAA+ region region. Residues Gly141, Gly143, Lys144, and Thr145 each coordinate ATP. A domain IV, binds dsDNA region spans residues Asn314 to Met437.

It belongs to the DnaA family. As to quaternary structure, oligomerizes as a right-handed, spiral filament on DNA at oriC.

It localises to the cytoplasm. Its function is as follows. Plays an essential role in the initiation and regulation of chromosomal replication. ATP-DnaA binds to the origin of replication (oriC) to initiate formation of the DNA replication initiation complex once per cell cycle. Binds the DnaA box (a 9 base pair repeat at the origin) and separates the double-stranded (ds)DNA. Forms a right-handed helical filament on oriC DNA; dsDNA binds to the exterior of the filament while single-stranded (ss)DNA is stabiized in the filament's interior. The ATP-DnaA-oriC complex binds and stabilizes one strand of the AT-rich DNA unwinding element (DUE), permitting loading of DNA polymerase. After initiation quickly degrades to an ADP-DnaA complex that is not apt for DNA replication. Binds acidic phospholipids. This is Chromosomal replication initiator protein DnaA from Thermosipho melanesiensis (strain DSM 12029 / CIP 104789 / BI429).